Here is a 178-residue protein sequence, read N- to C-terminus: Putative metal-dependent hydrolase GK0616 (178 aa).

Positions 68, 161, and 165 each coordinate Zn(2+).

This sequence belongs to the metal hydrolase YfiT family. In terms of assembly, homodimer. It depends on Zn(2+) as a cofactor.

It localises to the cytoplasm. Functionally, possible metal-dependent hydrolase. The polypeptide is Putative metal-dependent hydrolase GK0616 (Geobacillus kaustophilus (strain HTA426)).